Consider the following 98-residue polypeptide: UPF0213 protein in ldhD 5'region (98 aa).

A GIY-YIG domain is found at 7 to 84; sequence NGFYFYVLWC…KKQSRKEKLK (78 aa).

The protein belongs to the UPF0213 family.

The protein is UPF0213 protein in ldhD 5'region of Pediococcus acidilactici.